Here is a 425-residue protein sequence, read N- to C-terminus: Gamma-glutamyl phosphate reductase (425 aa).

It belongs to the gamma-glutamyl phosphate reductase family.

The protein localises to the cytoplasm. The enzyme catalyses L-glutamate 5-semialdehyde + phosphate + NADP(+) = L-glutamyl 5-phosphate + NADPH + H(+). The protein operates within amino-acid biosynthesis; L-proline biosynthesis; L-glutamate 5-semialdehyde from L-glutamate: step 2/2. Its function is as follows. Catalyzes the NADPH-dependent reduction of L-glutamate 5-phosphate into L-glutamate 5-semialdehyde and phosphate. The product spontaneously undergoes cyclization to form 1-pyrroline-5-carboxylate. This Novosphingobium aromaticivorans (strain ATCC 700278 / DSM 12444 / CCUG 56034 / CIP 105152 / NBRC 16084 / F199) protein is Gamma-glutamyl phosphate reductase.